A 424-amino-acid chain; its full sequence is Zinc metalloproteinase-disintegrin-like brevilysin H2a (424 aa).

Gln1 is subject to Pyrrolidone carboxylic acid. The Peptidase M12B domain occupies 9-207 (RYVKLAIVAD…YKPQCILNEP (199 aa)). N-linked (GlcNAc...) asparagine glycosylation is present at Asn69. Asp96 is a Ca(2+) binding site. 3 disulfides stabilise this stretch: Cys120–Cys202, Cys164–Cys186, and Cys166–Cys169. His145 is a binding site for Zn(2+). Residue Glu146 is part of the active site. Zn(2+) is bound by residues His149 and His155. N-linked (GlcNAc...) asparagine glycosylation occurs at Asn185. Ca(2+)-binding residues include Cys202, Asn205, Val217, Asn220, Leu222, Glu224, Glu227, and Asp230. Residues 215 to 301 (PPVCGNELLE…DCPTDDLQRN (87 aa)) enclose the Disintegrin domain. 14 disulfide bridges follow: Cys218–Cys247, Cys229–Cys242, Cys231–Cys237, Cys241–Cys264, Cys255–Cys261, Cys260–Cys286, Cys273–Cys293, Cys280–Cys312, Cys305–Cys317, Cys324–Cys374, Cys339–Cys385, Cys352–Cys362, Cys369–Cys411, and Cys405–Cys417. Residues 279 to 281 (DCD) carry the D/ECD-tripeptide motif. The Ca(2+) site is built by Asp281, Glu284, and Asp296. N-linked (GlcNAc...) asparagine glycosylation occurs at Asn331.

This sequence belongs to the venom metalloproteinase (M12B) family. P-III subfamily. P-IIIa sub-subfamily. As to quaternary structure, monomer. It depends on Zn(2+) as a cofactor. Post-translationally, glycosylated. Expressed by the venom gland.

It is found in the secreted. Its proteolytic activity is inhibited by EDTA, TPEN, 1,10-phenanthroline, and some thiol compounds, but is enhanced by alkaline earth metal ions (Mg2+, Ca2+, Sr2+, and Ba2+). Its activity is not modulated by urea (4 M). Functionally, non-hemorrhagic metalloproteinase that degrades fibrinogen. The alpha chain (FGA) is rapidly degraded, the beta chain (FGB) is degraded very slowly, while the gamma chain is left intact. Shows a prefential cleavage at X-Leu bonds. Cleaves insulin B chain at '29-His-|-Leu-30', '33-Ser-|-His-34', '38-Ala-|-Leu-39' and '40-Tyr-|-Leu-41' bonds. This is Zinc metalloproteinase-disintegrin-like brevilysin H2a from Gloydius brevicauda (Korean slamosa snake).